Consider the following 124-residue polypeptide: Ribonuclease pancreatic (124 aa).

A compositionally biased stretch (basic and acidic residues) spans 1–13; it reads KESAAAKFERQHM. The disordered stretch occupies residues 1–24; the sequence is KESAAAKFERQHMDSSTSSASSSN. Residues Lys7 and Arg10 each contribute to the substrate site. His12 serves as the catalytic Proton acceptor. 4 cysteine pairs are disulfide-bonded: Cys26–Cys84, Cys40–Cys95, Cys58–Cys110, and Cys65–Cys72. Substrate is bound by residues 41-45, Lys66, and Arg85; that span reads KPVNT. His119 serves as the catalytic Proton donor.

This sequence belongs to the pancreatic ribonuclease family. Monomer. Interacts with and forms tight 1:1 complexes with RNH1. Dimerization of two such complexes may occur. Interaction with RNH1 inhibits this protein. In terms of tissue distribution, pancreas.

The protein resides in the secreted. The enzyme catalyses an [RNA] containing cytidine + H2O = an [RNA]-3'-cytidine-3'-phosphate + a 5'-hydroxy-ribonucleotide-3'-[RNA].. The catalysed reaction is an [RNA] containing uridine + H2O = an [RNA]-3'-uridine-3'-phosphate + a 5'-hydroxy-ribonucleotide-3'-[RNA].. Endonuclease that catalyzes the cleavage of RNA on the 3' side of pyrimidine nucleotides. Acts on single-stranded and double-stranded RNA. In Connochaetes taurinus (Blue wildebeest), this protein is Ribonuclease pancreatic (RNASE1).